A 275-amino-acid chain; its full sequence is NH(3)-dependent NAD(+) synthetase (275 aa).

47 to 54 (GISGGQDS) lines the ATP pocket. Aspartate 53 is a Mg(2+) binding site. Arginine 141 serves as a coordination point for deamido-NAD(+). Threonine 161 lines the ATP pocket. Glutamate 166 provides a ligand contact to Mg(2+). The deamido-NAD(+) site is built by lysine 174 and aspartate 181. ATP-binding residues include lysine 190 and threonine 212. A deamido-NAD(+)-binding site is contributed by 261 to 262 (HK).

This sequence belongs to the NAD synthetase family. In terms of assembly, homodimer.

The catalysed reaction is deamido-NAD(+) + NH4(+) + ATP = AMP + diphosphate + NAD(+) + H(+). It participates in cofactor biosynthesis; NAD(+) biosynthesis; NAD(+) from deamido-NAD(+) (ammonia route): step 1/1. In terms of biological role, catalyzes the ATP-dependent amidation of deamido-NAD to form NAD. Uses ammonia as a nitrogen source. The protein is NH(3)-dependent NAD(+) synthetase of Latilactobacillus sakei subsp. sakei (strain 23K) (Lactobacillus sakei subsp. sakei).